Consider the following 349-residue polypeptide: Flagellar P-ring protein (349 aa).

Residues 1–20 form the signal peptide; sequence MSKAIKILLPLLLFSLSLQA.

It belongs to the FlgI family. As to quaternary structure, the basal body constitutes a major portion of the flagellar organelle and consists of four rings (L,P,S, and M) mounted on a central rod.

The protein resides in the periplasm. Its subcellular location is the bacterial flagellum basal body. Its function is as follows. Assembles around the rod to form the L-ring and probably protects the motor/basal body from shearing forces during rotation. This Wolinella succinogenes (strain ATCC 29543 / DSM 1740 / CCUG 13145 / JCM 31913 / LMG 7466 / NCTC 11488 / FDC 602W) (Vibrio succinogenes) protein is Flagellar P-ring protein.